A 296-amino-acid chain; its full sequence is ATP-dependent ribose-1-phosphate kinase (296 aa).

Asp-242 acts as the Proton acceptor in catalysis.

The protein belongs to the carbohydrate kinase PfkB family. It depends on Mg(2+) as a cofactor.

The catalysed reaction is alpha-D-ribose 1-phosphate + ATP = alpha-D-ribose 1,5-bisphosphate + ADP + H(+). With respect to regulation, requires salt for kinase activity. 2.0 M is the optimal KCl concentration. Functionally, kinase involved in the non-carboxylating pentose bisphosphate pathway, a nucleoside degradation pathway present in some halophilic archaea. Catalyzes the ATP-dependent phosphorylation of ribose 1-phosphate (R1P) to ribose 1,5-bisphosphate (R15P). Shows weak activity towards various other phosphate acceptors, such as xylulose, 2'-deoxyguanosine and D-ribulose. ATP is the most preferred phosphate donor, followed by CTP and GTP. In Halopiger xanaduensis (strain DSM 18323 / JCM 14033 / SH-6), this protein is ATP-dependent ribose-1-phosphate kinase.